Reading from the N-terminus, the 252-residue chain is Ureidoacrylate amidohydrolase RutB (252 aa).

Over residues 1-14 (MSTPARNTTLTSNT) the composition is skewed to polar residues. The tract at residues 1 to 31 (MSTPARNTTLTSNTPAGAPRLPGAPAPQVLP) is disordered. A compositionally biased stretch (low complexity) spans 15–27 (PAGAPRLPGAPAP). Residue Asp-50 is the Proton acceptor of the active site. The active site involves Lys-159. The active-site Nucleophile is the Cys-192.

The protein belongs to the isochorismatase family. RutB subfamily.

It catalyses the reaction (Z)-3-ureidoacrylate + H2O + H(+) = (Z)-3-aminoacrylate + NH4(+) + CO2. The catalysed reaction is (Z)-3-ureidoacrylate + H2O = (Z)-3-aminoacrylate + carbamate + H(+). It carries out the reaction (Z)-2-methylureidoacrylate + H2O + H(+) = (Z)-2-methylaminoacrylate + NH4(+) + CO2. Its function is as follows. Hydrolyzes ureidoacrylate to form aminoacrylate and carbamate. The carbamate hydrolyzes spontaneously, thereby releasing one of the nitrogen atoms of the pyrimidine ring as ammonia and one of its carbon atoms as CO2. This is Ureidoacrylate amidohydrolase RutB from Variovorax paradoxus (strain S110).